A 291-amino-acid polypeptide reads, in one-letter code: ATP synthase gamma chain (291 aa).

This sequence belongs to the ATPase gamma chain family. As to quaternary structure, F-type ATPases have 2 components, CF(1) - the catalytic core - and CF(0) - the membrane proton channel. CF(1) has five subunits: alpha(3), beta(3), gamma(1), delta(1), epsilon(1). CF(0) has three main subunits: a, b and c.

It localises to the cell inner membrane. Produces ATP from ADP in the presence of a proton gradient across the membrane. The gamma chain is believed to be important in regulating ATPase activity and the flow of protons through the CF(0) complex. The chain is ATP synthase gamma chain from Persephonella marina (strain DSM 14350 / EX-H1).